A 1259-amino-acid chain; its full sequence is Protein flightless-1 homolog (1259 aa).

15 LRR repeats span residues 7–32 (LPFI…VKSM), 33–55 (TSLR…LASL), 56–78 (QKLE…LSSL), 80–103 (NLRA…IFQL), 104–126 (DDLS…LENS), 128–149 (NMLV…LFIN), 150–173 (LTDL…MRRL), 176–201 (LQTL…VSLQ), 222–245 (LSNL…LYSL), 247–268 (NLKR…IDQW), 269–291 (TKLE…ICKL), 293–316 (KLKK…VGKL), 317–339 (SNLV…LCRC), 340–363 (GKLK…HFLT), and 365–385 (LEVL…PVDR). 4 Gelsolin-like repeats span residues 509–589 (IPIQ…SEEF), 628–702 (NIRL…PEFW), 757–830 (DVVP…CQVF), and 1170–1225 (EKCS…RSKD).

Expressed in ventricular cardiomyocytes, where it particularly localizes to intercalated disks and costamere-like structures (at protein level).

The protein localises to the nucleus. Its subcellular location is the cytoplasm. The protein resides in the cytoskeleton. It localises to the microtubule organizing center. It is found in the centrosome. The protein localises to the cell junction. Its subcellular location is the focal adhesion. Functionally, is a regulator of actin polymerization, required for proper myofibril organization and the assembly of cardiomyocyte cell adhesion complexes. Is a regulator of the length of sarcomeric thin filaments. Regulates cytoskeletal rearrangements involved in cytokinesis and cell migration, by inhibiting Rac1-dependent paxillin phosphorylation. May play a role as coactivator in transcriptional activation by hormone-activated nuclear receptors (NR) and acts in cooperation with NCOA2 and CARM1. Involved in estrogen hormone signaling. This chain is Protein flightless-1 homolog, found in Danio rerio (Zebrafish).